Here is a 149-residue protein sequence, read N- to C-terminus: Extracellular protease inhibitor 1 (149 aa).

Residues 1-16 (MKSALLFTLVVAAVHA) form the signal peptide. 2 Kazal-like domains span residues 29–86 (ESNE…SSTG) and 88–141 (QPPS…ACVG). 2 cysteine pairs are disulfide-bonded: Cys35–Cys65 and Cys39–Cys58. Asn67 is a glycosylation site (N-linked (GlcNAc...) asparagine). 3 disulfides stabilise this stretch: Cys94-Cys124, Cys98-Cys117, and Cys106-Cys139.

Interacts with host subtilisin-like protease P69B.

Its subcellular location is the secreted. Functionally, secreted effector that interacts with and inhibits the pathogenesis-related P69B subtilisin-like serine protease of host tomato. Inhibition of host proteases by a pathogen extracellular protease inhibitor forms a specific type of defense-counterdefense mechanism between plants and microbial pathogens. The polypeptide is Extracellular protease inhibitor 1 (Phytophthora infestans (Potato late blight agent)).